A 121-amino-acid chain; its full sequence is Phosphoribosyl-AMP cyclohydrolase (121 aa).

Residue Asp74 participates in Mg(2+) binding. Cys75 contributes to the Zn(2+) binding site. 2 residues coordinate Mg(2+): Asp76 and Asp78. Zn(2+) contacts are provided by Cys91 and Cys98.

This sequence belongs to the PRA-CH family. As to quaternary structure, homodimer. Mg(2+) serves as cofactor. The cofactor is Zn(2+).

It localises to the cytoplasm. It carries out the reaction 1-(5-phospho-beta-D-ribosyl)-5'-AMP + H2O = 1-(5-phospho-beta-D-ribosyl)-5-[(5-phospho-beta-D-ribosylamino)methylideneamino]imidazole-4-carboxamide. It functions in the pathway amino-acid biosynthesis; L-histidine biosynthesis; L-histidine from 5-phospho-alpha-D-ribose 1-diphosphate: step 3/9. Catalyzes the hydrolysis of the adenine ring of phosphoribosyl-AMP. The protein is Phosphoribosyl-AMP cyclohydrolase of Methanothrix thermoacetophila (strain DSM 6194 / JCM 14653 / NBRC 101360 / PT) (Methanosaeta thermophila).